A 196-amino-acid chain; its full sequence is Potassium-transporting ATPase KdpC subunit (196 aa).

The chain crosses the membrane as a helical span at residues 7-27 (PAIVSAGLFTVLLGLAYPLAV).

Belongs to the KdpC family. The system is composed of three essential subunits: KdpA, KdpB and KdpC.

Its subcellular location is the cell inner membrane. In terms of biological role, part of the high-affinity ATP-driven potassium transport (or Kdp) system, which catalyzes the hydrolysis of ATP coupled with the electrogenic transport of potassium into the cytoplasm. This subunit acts as a catalytic chaperone that increases the ATP-binding affinity of the ATP-hydrolyzing subunit KdpB by the formation of a transient KdpB/KdpC/ATP ternary complex. The sequence is that of Potassium-transporting ATPase KdpC subunit from Caulobacter sp. (strain K31).